A 93-amino-acid polypeptide reads, in one-letter code: Large ribosomal subunit protein uL23cz/uL23cy (93 aa).

This sequence belongs to the universal ribosomal protein uL23 family. Part of the 50S ribosomal subunit.

The protein localises to the plastid. It is found in the chloroplast. Its function is as follows. Binds to 23S rRNA. This is Large ribosomal subunit protein uL23cz/uL23cy (rpl23-A) from Lotus japonicus (Lotus corniculatus var. japonicus).